The sequence spans 334 residues: Inositol 2-dehydrogenase (334 aa).

This sequence belongs to the Gfo/Idh/MocA family. In terms of assembly, homotetramer.

The enzyme catalyses myo-inositol + NAD(+) = scyllo-inosose + NADH + H(+). In terms of biological role, involved in the oxidation of myo-inositol (MI) to 2-keto-myo-inositol (2KMI or 2-inosose). The chain is Inositol 2-dehydrogenase from Cereibacter sphaeroides (strain ATCC 17029 / ATH 2.4.9) (Rhodobacter sphaeroides).